The following is a 78-amino-acid chain: MSEQLKIKAMRAAGVGCVLMLMIIALVVFMLPTGILIDYLTLAGSWVGGGTTFGILMLAALPPLTGAIFYYFWKWVLK.

The next 2 membrane-spanning stretches (helical) occupy residues 13 to 35 (AGVGCVLMLMIIALVVFMLPTGI) and 50 to 72 (GTTFGILMLAALPPLTGAIFYYF).

The protein resides in the cell membrane. This is an uncharacterized protein from Pasteurella multocida (strain Pm70).